The sequence spans 156 residues: Transcription factor MafK (156 aa).

Residues 1–21 (MTTNPKPNKALKVKEESGENA) form a disordered region. The segment at 51-76 (RLKQRRRTLKNRGYAASCRIKRVTQK) is basic motif. In terms of domain architecture, bZIP spans 51-114 (RLKQRRRTLK…DALRSKYEAL (64 aa)). Residues 79-93 (LERQRVELQQEVEKL) form a leucine-zipper region.

Belongs to the bZIP family. Maf subfamily. In terms of assembly, homodimer or heterodimer.

It is found in the nucleus. In terms of biological role, since they lack a putative transactivation domain, the small Mafs behave as transcriptional repressors when they dimerize among themselves. However, they act as transcriptional activators by dimerizing with other (usually larger) basic-zipper proteins and recruiting them to specific DNA-binding sites. Small Maf proteins heterodimerize with Fos and may act as competitive repressors of the NF-E2 transcription factor. In Gallus gallus (Chicken), this protein is Transcription factor MafK (MAFK).